The primary structure comprises 27 residues: Cysteine-rich venom protein tropirin (27 aa).

The protein belongs to the CRISP family. Contains 8 disulfide bonds. Expressed by the venom gland.

It is found in the secreted. In terms of biological role, blocks contraction of smooth muscle elicited by high potassium-induced depolarization, but does not block caffeine-stimulated contraction. May target voltage-gated calcium channels on smooth muscle. This chain is Cysteine-rich venom protein tropirin, found in Tropidechis carinatus (Australian rough-scaled snake).